A 550-amino-acid polypeptide reads, in one-letter code: Homeobox and leucine zipper protein Homez (550 aa).

Residues 1 to 10 (MVRGWEPPPG) are compositionally biased toward pro residues. The tract at residues 1-36 (MVRGWEPPPGLDCAISEGHKSEGTMPPNKEASGLSS) is disordered. Positions 55–114 (WTQAAQTSELDSNEHLLKTFSYFPYPSLADIALLCLRYGLQMEKVKTWFMAQRLRCGISW) form a DNA-binding region, homeobox 1. Residues 168-199 (GPPTLSKPTQTKGLKVEPEEPSQMPPLPQSHQ) are disordered. Residues Lys182, Lys200, and Lys202 each participate in a glycyl lysine isopeptide (Lys-Gly) (interchain with G-Cter in SUMO2) cross-link. Residues 223-265 (LQSSGLSKEQAGRGPNQSHGIGTASWNHSTTVPQPQARDKPPP) are disordered. The segment covering 237-256 (PNQSHGIGTASWNHSTTVPQ) has biased composition (polar residues). Ser351 is subject to Phosphoserine. 2 consecutive DNA-binding regions (homeobox) follow at residues 355–415 (QRQR…KHGQ) and 451–510 (TPPL…AEVV). The short motif at 358-363 (RKTKRK) is the Nuclear localization signal element. Disordered regions lie at residues 424–465 (VPGA…DIQP) and 512–550 (CLDE…IIQD). Thr451 is modified (phosphothreonine). A compositionally biased stretch (pro residues) spans 452 to 463 (PPLPIPPPPPDI). Acidic residues predominate over residues 513 to 550 (LDEEEEEEEEELPEDDEEEEEEEEEDDDDDDDDVIIQD).

In terms of assembly, homodimer or heterodimer (Potential). Interacts with HOXC8. In terms of tissue distribution, ubiquitous. Strongly expressed in adult testis and kidney as well as fetal lung and kidney.

Its subcellular location is the nucleus. Its function is as follows. May function as a transcriptional regulator. This is Homeobox and leucine zipper protein Homez (HOMEZ) from Homo sapiens (Human).